The following is a 61-amino-acid chain: Small ribosomal subunit protein uS14 (61 aa).

Zn(2+) is bound by residues C24, C27, C40, and C43.

It belongs to the universal ribosomal protein uS14 family. Zinc-binding uS14 subfamily. Part of the 30S ribosomal subunit. Contacts proteins S3 and S10. It depends on Zn(2+) as a cofactor.

In terms of biological role, binds 16S rRNA, required for the assembly of 30S particles and may also be responsible for determining the conformation of the 16S rRNA at the A site. The chain is Small ribosomal subunit protein uS14 from Treponema denticola (strain ATCC 35405 / DSM 14222 / CIP 103919 / JCM 8153 / KCTC 15104).